The following is a 668-amino-acid chain: MIDFFLKSEYLPAGDQPKAIKEIENSILLGNKYQTLKGVTGSGKTFTIANIIKDLNRPALVVSHNKTLAAQLYREFKDFFPNNAVEYFVSYYDYYQPESYVPSKDLFIEKEATINTEIEIKRIRTVTSLAKRRDVIVVATVSSIYALGSPDFFKKSAREFFVGQKISIKEISDIFVELYYERTLMNLERDKFSIKGDIVEIWPSSEHGEFAYRICLDFDEIVEIYRVSSFSKKKLGATNSFTLFAKSYFVIPYENVLEAIPKISHDLSLQCQYFKDNGRLVEAERLKQRVEYDLEMLRETGFCSGIENYSKYLSGSTMERPYCLFDFFPKDYLLFVDESHVTLPQFRGMYNGDHSRKLNLVNFGFRLPAALENRPLKYDEFEALINQVVFVSATPGVEENEKSSVVVDQIIRPTGLVDPEIITRRSDGQMEDLYSEIQKRVALKERVLITTLTKKMSEDLTEYLVNLGVRAKYLHSELDTLERVEVISLLRKSEIDVIVGINLLREGLDIPEVSLVAILDADKVGFLRSTTSLIQTIGRAARNSNGLVIMYYDKISLAMREAIEETNRRRQIQIDYNEKNNITPKTIVKKIQNILEKELNNKNKNVGYDFEKIISDERLSKKKLIDKLKFDLEEAVNDERFEDAIVLRDKIKELSSKISIARNKKREV.

The Helicase ATP-binding domain maps to 25–170; that stretch reads NSILLGNKYQ…FVGQKISIKE (146 aa). Residue 38–45 coordinates ATP; sequence GVTGSGKT. The short motif at 91–114 is the Beta-hairpin element; that stretch reads YYDYYQPESYVPSKDLFIEKEATI. The Helicase C-terminal domain maps to 429 to 595; that stretch reads QMEDLYSEIQ…TIVKKIQNIL (167 aa). The 36-residue stretch at 622–657 folds into the UVR domain; it reads KKLIDKLKFDLEEAVNDERFEDAIVLRDKIKELSSK.

Belongs to the UvrB family. In terms of assembly, forms a heterotetramer with UvrA during the search for lesions. Interacts with UvrC in an incision complex.

It localises to the cytoplasm. Functionally, the UvrABC repair system catalyzes the recognition and processing of DNA lesions. A damage recognition complex composed of 2 UvrA and 2 UvrB subunits scans DNA for abnormalities. Upon binding of the UvrA(2)B(2) complex to a putative damaged site, the DNA wraps around one UvrB monomer. DNA wrap is dependent on ATP binding by UvrB and probably causes local melting of the DNA helix, facilitating insertion of UvrB beta-hairpin between the DNA strands. Then UvrB probes one DNA strand for the presence of a lesion. If a lesion is found the UvrA subunits dissociate and the UvrB-DNA preincision complex is formed. This complex is subsequently bound by UvrC and the second UvrB is released. If no lesion is found, the DNA wraps around the other UvrB subunit that will check the other stand for damage. The polypeptide is UvrABC system protein B (Borreliella burgdorferi (strain ZS7) (Borrelia burgdorferi)).